The primary structure comprises 116 residues: MTRVKRGNVARKRRKKILKLAKGYRGSHSRLFRIANQQVMKALRNAYRDRRKRKRDFRRLWIARINAATRQHGVSYSKFMGQLKRADIQLNRKMLAQLAATDPDSFSKIVELAGKA.

It belongs to the bacterial ribosomal protein bL20 family.

In terms of biological role, binds directly to 23S ribosomal RNA and is necessary for the in vitro assembly process of the 50S ribosomal subunit. It is not involved in the protein synthesizing functions of that subunit. This chain is Large ribosomal subunit protein bL20, found in Acaryochloris marina (strain MBIC 11017).